Consider the following 240-residue polypeptide: B-cell receptor-associated protein 29 (240 aa).

Residues 1–6 (MTLQWT) lie on the Lumenal side of the membrane. The chain crosses the membrane as a helical span at residues 7–27 (AVATFLYAEIGLILIFCLPFI). Over 28 to 43 (PPQRWQKIFSFSVWGK) the chain is Cytoplasmic. Residues 44–64 (IASFWNKAFLTIIILLIVLFL) form a helical membrane-spanning segment. At 65 to 103 (DAVREVRKYSSTHTIEKSSASRPAAYEHTQMKLFRSQRN) the chain is on the lumenal side. A helical membrane pass occupies residues 104 to 124 (LYISGFSLFFWLVLRRLVTLI). The Cytoplasmic portion of the chain corresponds to 125–240 (TQLAKELSHK…DRAGKDKKCL (116 aa)). Residues 166–233 (GKEEEHILEA…REHSELQDRA (68 aa)) are a coiled coil. Residues 237 to 240 (KKCL) carry the Di-lysine motif motif.

This sequence belongs to the BCAP29/BCAP31 family. In terms of assembly, homodimer and heterodimer with BCAP31. Binds CASP8 as a complex containing BCAP31, BCAP29, BCL2 and/or BCL2L1. Interacts with VAMP3, VAMP1 and membrane IgD immunoglobulins. May interact with ACTG1 and non-muscle myosin II.

Its subcellular location is the endoplasmic reticulum membrane. May play a role in anterograde transport of membrane proteins from the endoplasmic reticulum to the Golgi. May be involved in CASP8-mediated apoptosis. The chain is B-cell receptor-associated protein 29 (BCAP29) from Bos taurus (Bovine).